Reading from the N-terminus, the 151-residue chain is uncharacterized protein (151 aa).

The disordered stretch occupies residues 122-151 (GVAQRQVPTTGTHSFFHCTSEGNKEKPHHF).

This is an uncharacterized protein from Homo sapiens (Human).